The chain runs to 143 residues: Large ribosomal subunit protein uL11 (143 aa).

It belongs to the universal ribosomal protein uL11 family. Part of the ribosomal stalk of the 50S ribosomal subunit. Interacts with L10 and the large rRNA to form the base of the stalk. L10 forms an elongated spine to which L12 dimers bind in a sequential fashion forming a multimeric L10(L12)X complex. In terms of processing, one or more lysine residues are methylated.

Functionally, forms part of the ribosomal stalk which helps the ribosome interact with GTP-bound translation factors. This Borrelia garinii subsp. bavariensis (strain ATCC BAA-2496 / DSM 23469 / PBi) (Borreliella bavariensis) protein is Large ribosomal subunit protein uL11.